The following is a 78-amino-acid chain: uncharacterized protein (78 aa).

This is an uncharacterized protein from Helicobacter pylori (strain J99 / ATCC 700824) (Campylobacter pylori J99).